The primary structure comprises 295 residues: UDP-N-acetylenolpyruvoylglucosamine reductase (295 aa).

The FAD-binding PCMH-type domain occupies 24-188 (KVGGNAEIFF…LKAIFKANKG (165 aa)). The active site involves Arg168. Ser217 (proton donor) is an active-site residue. Glu287 is an active-site residue.

Belongs to the MurB family. The cofactor is FAD.

It localises to the cytoplasm. It carries out the reaction UDP-N-acetyl-alpha-D-muramate + NADP(+) = UDP-N-acetyl-3-O-(1-carboxyvinyl)-alpha-D-glucosamine + NADPH + H(+). Its pathway is cell wall biogenesis; peptidoglycan biosynthesis. Functionally, cell wall formation. This is UDP-N-acetylenolpyruvoylglucosamine reductase from Rickettsia typhi (strain ATCC VR-144 / Wilmington).